The following is a 156-amino-acid chain: ATP synthase subunit b (156 aa).

A helical membrane pass occupies residues 7 to 27 (LIGQTVAFIIFVWFCMKFVWP).

This sequence belongs to the ATPase B chain family. In terms of assembly, F-type ATPases have 2 components, F(1) - the catalytic core - and F(0) - the membrane proton channel. F(1) has five subunits: alpha(3), beta(3), gamma(1), delta(1), epsilon(1). F(0) has three main subunits: a(1), b(2) and c(10-14). The alpha and beta chains form an alternating ring which encloses part of the gamma chain. F(1) is attached to F(0) by a central stalk formed by the gamma and epsilon chains, while a peripheral stalk is formed by the delta and b chains.

It localises to the cell inner membrane. Its function is as follows. F(1)F(0) ATP synthase produces ATP from ADP in the presence of a proton or sodium gradient. F-type ATPases consist of two structural domains, F(1) containing the extramembraneous catalytic core and F(0) containing the membrane proton channel, linked together by a central stalk and a peripheral stalk. During catalysis, ATP synthesis in the catalytic domain of F(1) is coupled via a rotary mechanism of the central stalk subunits to proton translocation. Functionally, component of the F(0) channel, it forms part of the peripheral stalk, linking F(1) to F(0). The protein is ATP synthase subunit b of Shewanella baltica (strain OS185).